The primary structure comprises 126 residues: MAIIGIGTDIVEIERIREQRDRLGDKLAKRVLTLDELAIYAAVNMPERYLAKRFAAKEAAAKALGTGIGRGVSFQHIHISNDDNGAPLVNFTDGAALRLAQLGGCKGHISIADEKHYAIATVILES.

Positions 9 and 58 each coordinate Mg(2+).

Belongs to the P-Pant transferase superfamily. AcpS family. Mg(2+) is required as a cofactor.

It is found in the cytoplasm. The enzyme catalyses apo-[ACP] + CoA = holo-[ACP] + adenosine 3',5'-bisphosphate + H(+). Functionally, transfers the 4'-phosphopantetheine moiety from coenzyme A to a Ser of acyl-carrier-protein. This chain is Holo-[acyl-carrier-protein] synthase, found in Shewanella denitrificans (strain OS217 / ATCC BAA-1090 / DSM 15013).